We begin with the raw amino-acid sequence, 54 residues long: Snake venom 5'-nucleotidase (54 aa).

Zn(2+) contacts are provided by Asp11 and His13. Asn46 carries an N-linked (GlcNAc...) asparagine glycan.

The protein belongs to the 5'-nucleotidase family. The cofactor is Zn(2+). In terms of processing, venom 5'-nucleotidases (or a part thereof) may be released into the venom via exosome-like vesicles. They may be attached via a GPI anchor to the membrane of these vesicles. Soluble forms of 5'-nucleotidase might be released by cleavage of the ectodomain in the exosome-like vesicles or venom gland cells. As to expression, expressed by the venom gland.

The protein localises to the membrane. The enzyme catalyses a ribonucleoside 5'-phosphate + H2O = a ribonucleoside + phosphate. Functionally, hydrolyzes nucleotides into nucleosides. Snake venom 5'-nucleotidases are widely distributed among venomous snake taxa, but there is a lack of information about their biological activities. They have been shown to inhibit platelet aggregation. This effect may be due to the liberation of inhibitory AMP or adenosine by its action on ADP released upon initiation of aggregation. Venom 5'-nucleotidases are also known to synergistically act in vivo with other toxins like ADPases, phospholipases, and disintegrins to exert a more pronounced anti-coagulant effect. This Gloydius blomhoffii blomhoffii (Japanese mamushi) protein is Snake venom 5'-nucleotidase.